The following is a 200-amino-acid chain: LHFPL tetraspan subfamily member 6 protein (200 aa).

The signal sequence occupies residues 1–23 (MASSLTCTGVIWALLSFLSAATS). A run of 3 helical transmembrane segments spans residues 84–104 (ICTI…LTAL), 123–143 (GIQF…PLGW), and 166–186 (IGWA…LCTW).

It belongs to the LHFP family.

Its subcellular location is the membrane. In Rattus norvegicus (Rat), this protein is LHFPL tetraspan subfamily member 6 protein.